Consider the following 495-residue polypeptide: Guanosine-5'-triphosphate,3'-diphosphate pyrophosphatase (495 aa).

It belongs to the GppA/Ppx family. GppA subfamily.

It catalyses the reaction guanosine 3'-diphosphate 5'-triphosphate + H2O = guanosine 3',5'-bis(diphosphate) + phosphate + H(+). The protein operates within purine metabolism; ppGpp biosynthesis; ppGpp from GTP: step 2/2. In terms of biological role, catalyzes the conversion of pppGpp to ppGpp. Guanosine pentaphosphate (pppGpp) is a cytoplasmic signaling molecule which together with ppGpp controls the 'stringent response', an adaptive process that allows bacteria to respond to amino acid starvation, resulting in the coordinated regulation of numerous cellular activities. The polypeptide is Guanosine-5'-triphosphate,3'-diphosphate pyrophosphatase (Enterobacter sp. (strain 638)).